The sequence spans 556 residues: Aplysianin-A (556 aa).

The first 19 residues, 1–19 (MAVRFLALGLLIFVTSCSG), serve as a signal peptide directing secretion. N-linked (GlcNAc...) asparagine glycosylation is found at asparagine 150, asparagine 177, asparagine 374, asparagine 399, asparagine 414, and asparagine 430.

It to A.fulica achacin protein. As to quaternary structure, homotetramer. In terms of tissue distribution, albumen gland.

Has antibacterial activity against Gram-negative and Gram-positive bacteria. The sequence is that of Aplysianin-A from Aplysia kurodai (Kuroda's sea hare).